Here is a 503-residue protein sequence, read N- to C-terminus: Maturase K (503 aa).

It belongs to the intron maturase 2 family. MatK subfamily.

It localises to the plastid. The protein localises to the chloroplast. Usually encoded in the trnK tRNA gene intron. Probably assists in splicing its own and other chloroplast group II introns. This Liquidambar formosana (Formosan gum) protein is Maturase K.